Here is an 82-residue protein sequence, read N- to C-terminus: UPF0291 protein LVIS_1359 (82 aa).

The protein belongs to the UPF0291 family.

It is found in the cytoplasm. This chain is UPF0291 protein LVIS_1359, found in Levilactobacillus brevis (strain ATCC 367 / BCRC 12310 / CIP 105137 / JCM 1170 / LMG 11437 / NCIMB 947 / NCTC 947) (Lactobacillus brevis).